Here is a 453-residue protein sequence, read N- to C-terminus: Allantoinase (453 aa).

Residues His59, His61, Lys146, His186, His242, and Asp315 each contribute to the Zn(2+) site. Position 146 is an N6-carboxylysine (Lys146).

The protein belongs to the metallo-dependent hydrolases superfamily. Allantoinase family. Homotetramer. Zn(2+) is required as a cofactor. Carboxylation allows a single lysine to coordinate two zinc ions.

The enzyme catalyses (S)-allantoin + H2O = allantoate + H(+). It participates in nitrogen metabolism; (S)-allantoin degradation; allantoate from (S)-allantoin: step 1/1. Catalyzes the conversion of allantoin (5-ureidohydantoin) to allantoic acid by hydrolytic cleavage of the five-member hydantoin ring. In Salmonella agona (strain SL483), this protein is Allantoinase.